The sequence spans 1820 residues: uncharacterized protein (1820 aa).

Disordered regions lie at residues 1 to 73, 86 to 158, 226 to 260, 286 to 366, 453 to 497, 519 to 548, 577 to 597, 619 to 689, and 735 to 830; these read MQWT…TLSG, TTTT…VRSA, GSSG…NNNY, EERA…QETE, DVQD…RNLS, LSSI…TDTA, GNSS…PPTP, GAGT…TASG, and HSHN…TPSS. Polar residues predominate over residues 20 to 31; sequence NRNSIEQRTPAN. Residues 86–128 show a composition bias toward low complexity; the sequence is TTTTTIIESSSSTNTTLEKNSPSPAGGSCSSGSGSLSPAYLQH. Positions 129 to 146 are enriched in basic residues; that stretch reads HLQHHGSPLHHLQVHHHT. Positions 247 to 259 are enriched in low complexity; it reads SNSSNCSSQFNNN. Residues 265–308 are a coiled coil; it reads VDSLDDMLRKLTELEQRVIEAEERAEEAEDKVRAMEQRLSEWPK. The segment covering 294–305 has biased composition (basic and acidic residues); it reads DKVRAMEQRLSE. Over residues 346-358 the composition is skewed to low complexity; the sequence is ASGGATAGAAGSG. The stretch at 362-438 forms a coiled coil; it reads TQETEKTITS…LKNHIANQSQ (77 aa). A compositionally biased stretch (polar residues) spans 453–463; sequence DVQDFTGSGSN. A phosphoserine mark is found at Ser542 and Ser543. Low complexity predominate over residues 623-632; the sequence is GTSTAESTAS. The segment covering 655–669 has biased composition (gly residues); sequence HGSGTGIGTGDGHGT. Over residues 738 to 769 the composition is skewed to low complexity; sequence NSSSTDNTETSTSGSASSPSKSLKTSSSLSPA. The segment covering 787 to 818 has biased composition (polar residues); that stretch reads QSRTSTTPSSRINQHLQPSQHQHHTLSNQNHG. PH domains follow at residues 909-1003 and 1017-1124; these read SLEK…NVQR and KPTV…VVSG. 3 positions are modified to phosphoserine: Ser1073, Ser1075, and Ser1077. The 220-residue stretch at 1159–1378 folds into the MyTH4 domain; the sequence is HTKDTITAPL…PSRMEVLSIL (220 aa). The FERM domain occupies 1389-1712; the sequence is HAIPVHMMNS…DYMNALGHTV (324 aa). Disordered regions lie at residues 1713–1748 and 1764–1820; these read PGTP…ATGF and ATHT…QRIK. Residues 1714–1724 show a composition bias toward polar residues; that stretch reads GTPQMNSLTRN. Positions 1764-1781 are enriched in low complexity; that stretch reads ATHTLNSNHSHTLSSSHH. Over residues 1805 to 1820 the composition is skewed to basic and acidic residues; that stretch reads HQPDILKSTPDHQRIK.

This is an uncharacterized protein from Drosophila melanogaster (Fruit fly).